The sequence spans 66 residues: Large ribosomal subunit protein uL30 (66 aa).

The protein belongs to the universal ribosomal protein uL30 family. As to quaternary structure, part of the 50S ribosomal subunit.

This Azorhizobium caulinodans (strain ATCC 43989 / DSM 5975 / JCM 20966 / LMG 6465 / NBRC 14845 / NCIMB 13405 / ORS 571) protein is Large ribosomal subunit protein uL30.